The chain runs to 94 residues: Putative pterin-4-alpha-carbinolamine dehydratase (94 aa).

Belongs to the pterin-4-alpha-carbinolamine dehydratase family.

It catalyses the reaction (4aS,6R)-4a-hydroxy-L-erythro-5,6,7,8-tetrahydrobiopterin = (6R)-L-erythro-6,7-dihydrobiopterin + H2O. The chain is Putative pterin-4-alpha-carbinolamine dehydratase from Caulobacter vibrioides (strain ATCC 19089 / CIP 103742 / CB 15) (Caulobacter crescentus).